Reading from the N-terminus, the 241-residue chain is Tetraspanin-1 (241 aa).

The Cytoplasmic portion of the chain corresponds to 1-11 (MQCFSFIKTMM). A helical membrane pass occupies residues 12 to 32 (ILFNLLIFLCGAALLAVGIWV). The Extracellular segment spans residues 33 to 52 (SIDGASFLKIFGPLSSSAMQ). A helical transmembrane segment spans residues 53-73 (FVNVGYFLIAAGVVVFALGFL). Residues 74 to 88 (GCYGAKTESKCALVT) lie on the Cytoplasmic side of the membrane. A helical membrane pass occupies residues 89 to 109 (FFFILLLIFIAEVAAAVVALV). At 110 to 211 (YTTMAEHFLT…NQLLYDIRTN (102 aa)) the chain is on the extracellular side. N-linked (GlcNAc...) asparagine glycosylation is found at Asn-141, Asn-154, Asn-178, and Asn-184. Residues 212 to 232 (AVTVGGVAAGIGGLELAAMIV) form a helical membrane-spanning segment. At 233 to 241 (SMYLYCNLQ) the chain is on the cytoplasmic side.

The protein belongs to the tetraspanin (TM4SF) family. As to quaternary structure, interacts with SLC19A2. Interacts with NTRK1/TRKA.

Its subcellular location is the cell membrane. It localises to the lysosome membrane. Structural component of specialized membrane microdomains known as tetraspanin-enriched microdomains (TERMs), which act as platforms for receptor clustering and signaling. Participates thereby in diverse biological functions such as cell signal transduction, adhesion, migration and protein trafficking. Regulates neuronal differentiation in response to NGF by facilitating NGF-mediated activation of NTRK1/TRKA receptor tyrosine kinase and subsequent downstream signaling pathways. Plays a role in the inhibition of TNFalpha-induced apoptosis. Mechanistically, inhibits the NF-kappa-B signaling pathway by blocking phosphorylation of CHUK. Also promotes the stability of the thiamine transporter 1/SLC19A2 in intestinal epithelial cells leading to an increase of thiamine uptake process. The polypeptide is Tetraspanin-1 (TSPAN1) (Homo sapiens (Human)).